A 336-amino-acid polypeptide reads, in one-letter code: Ultraviolet-sensitive opsin (336 aa).

The Extracellular segment spans residues 1 to 29; that stretch reads MDAWTYQFGNLSKISPFEGPQYHLAPKWA. A glycan (N-linked (GlcNAc...) asparagine) is linked at Asn-10. The chain crosses the membrane as a helical span at residues 30–54; it reads FYLQAAFMGFVFFVGTPLNAIVLFV. Topologically, residues 55 to 66 are cytoplasmic; that stretch reads TMKYKKLRQPLN. Residues 67-91 traverse the membrane as a helical segment; sequence YILVNISLGGFIFDTFSVSQVFFSA. At 92-106 the chain is on the extracellular side; sequence LRGYYFFGYTLCAME. A disulfide bridge connects residues Cys-103 and Cys-180. A helical transmembrane segment spans residues 107–126; sequence AAMGSIAGLVTGWSLAVLAF. The Cytoplasmic portion of the chain corresponds to 127–145; it reads ERYVVICKPFGSFKFGQSQ. A helical membrane pass occupies residues 146–169; it reads ALGAVALTWIIGIGCATPPFWGWS. The Extracellular portion of the chain corresponds to 170–195; that stretch reads RYIPEGIGTACGPDWYTKNEEYNTES. The chain crosses the membrane as a helical span at residues 196-223; it reads YTYFLLVSCFMMPIMIITFSYSQLLGAL. The Cytoplasmic segment spans residues 224 to 245; it reads RAVAAQQAESASTQKAEKEVSR. The chain crosses the membrane as a helical span at residues 246–269; that stretch reads MVVVMVGSFVVCYGPYAITALYFS. The Extracellular segment spans residues 270 to 277; the sequence is YAEDSNKD. Residues 278-302 traverse the membrane as a helical segment; it reads YRLVAIPSLFSKSSCVYNPLIYAFM. Lys-289 carries the post-translational modification N6-(retinylidene)lysine. Residues 303-336 lie on the Cytoplasmic side of the membrane; it reads NKQFNACIMETVFGKKIDESSEVSSKTETSSVSA.

This sequence belongs to the G-protein coupled receptor 1 family. Opsin subfamily. Phosphorylated on some or all of the serine and threonine residues present in the C-terminal region.

It is found in the membrane. Its function is as follows. Visual pigments are the light-absorbing molecules that mediate vision. They consist of an apoprotein, opsin, covalently linked to cis-retinal. The polypeptide is Ultraviolet-sensitive opsin (Carassius auratus (Goldfish)).